The following is a 356-amino-acid chain: Butyrate kinase 2 (356 aa).

The protein belongs to the acetokinase family. In terms of assembly, homodimer.

It localises to the cytoplasm. The enzyme catalyses butanoate + ATP = butanoyl phosphate + ADP. It functions in the pathway lipid metabolism; butanoate metabolism. In terms of biological role, catalyzes the conversion of butyryl-CoA through butyryl phosphate to butyrate. The protein is Butyrate kinase 2 (buk2) of Clostridium acetobutylicum (strain ATCC 824 / DSM 792 / JCM 1419 / IAM 19013 / LMG 5710 / NBRC 13948 / NRRL B-527 / VKM B-1787 / 2291 / W).